The primary structure comprises 694 residues: U-box domain-containing protein 1 (694 aa).

In terms of domain architecture, U-box spans 292–366 (NIPDEFRCPI…HQWCYENNVK (75 aa)). 7 ARM repeats span residues 392 to 432 (SENK…LLAK), 435 to 474 (MDNRRIIAEVGAIPFLVTLLVSKDSRIQEHVVTALFNLSI), 476 to 516 (DNNK…SLSM), 519 to 558 (DCKVQIGASSRAIPALVGLLKEGTIIGKRDAATALFNLAV), 560 to 599 (NPNKLSIVKSGAVTLLVELLMDDKAGITDDSLAVLAVLLG), 601 to 641 (SEGL…GLCK), and 646 to 685 (LVAMRLLANPRSIPSLQSLAADGSLRARRKADALLRLLNR).

In terms of assembly, interacts with LYK3. Binds to NORK/DMI2. Phosphorylated by LYK3 in vitro. Phosphorylated by NORK/DMI2. As to expression, present ubiquitously at very low levels during nonsymbiotic growth. Accumulates in roots and nodules during symbiotic growth with rhizobia and mycorrhiza.

Its subcellular location is the cell membrane. The enzyme catalyses S-ubiquitinyl-[E2 ubiquitin-conjugating enzyme]-L-cysteine + [acceptor protein]-L-lysine = [E2 ubiquitin-conjugating enzyme]-L-cysteine + N(6)-ubiquitinyl-[acceptor protein]-L-lysine.. It participates in protein modification; protein ubiquitination. Functionally, exhibits U-box-dependent E3 ubiquitin ligase activity in vitro. Negatively modulates successive stages of infection and development of rhizobial (e.g. Sinorhizobium meliloti) and arbuscular mycorrhizal fungi (AM, e.g. Rhizophagus irregularis) symbioses, in an ubiquitin ligase activity-dependent manner. Negative regulator of the LYK3 signaling pathway leading to nitrogen-fixing symbiosis (e.g. infection and nodulation) by rhizobia. May be involved in the discrimination of rhizobium strains producing variant Nod factors. The sequence is that of U-box domain-containing protein 1 from Medicago truncatula (Barrel medic).